The primary structure comprises 329 residues: Tagatose 1,6-diphosphate aldolase 2 (329 aa).

This sequence belongs to the aldolase LacD family.

The enzyme catalyses D-tagatofuranose 1,6-bisphosphate = D-glyceraldehyde 3-phosphate + dihydroxyacetone phosphate. It functions in the pathway carbohydrate metabolism; D-tagatose 6-phosphate degradation; D-glyceraldehyde 3-phosphate and glycerone phosphate from D-tagatose 6-phosphate: step 2/2. The chain is Tagatose 1,6-diphosphate aldolase 2 (lacD2) from Streptococcus mutans serotype c (strain ATCC 700610 / UA159).